A 1142-amino-acid chain; its full sequence is ABC transporter F family member 4 (1142 aa).

Positions 1–564 (MGPKGKKKGQ…EDAFELAKKK (564 aa)) are disordered. Low complexity-rich tracts occupy residues 121-143 (PQPV…QQQQ), 153-166 (PQPV…APQK), and 182-195 (PQPV…APQK). 2 stretches are compositionally biased toward acidic residues: residues 203–212 (SEDEDEEDEV) and 233–244 (EEEEEEEEEEIE). Basic residues-rich tracts occupy residues 249–261 (KGGK…KGGK) and 280–290 (KGGKKDKKKGS). The segment covering 295–306 (EEEEEEEEEEIE) has biased composition (acidic residues). Residues 314-328 (NKKDQKKGGKGKHVE) are compositionally biased toward basic and acidic residues. Over residues 329–340 (EEEEEEEEEEIE) the composition is skewed to acidic residues. Residues 377-387 (KGGKKDKKKGS) are compositionally biased toward basic residues. 2 stretches are compositionally biased toward acidic residues: residues 392-404 (EEEE…EEIE) and 441-451 (EEEEQEQEEEE). Basic residues predominate over residues 456-467 (SKSNKKDKKKGK). Positions 471–480 (EEEEEEEEEE) are enriched in acidic residues. Residues 485–496 (SKSNKKDKKKGS) are compositionally biased toward basic residues. Acidic residues predominate over residues 501-518 (EEEEEEEEEEEEEKEEEE). Residues 530-548 (AKKVKKVDKKEKKKEKEKK) show a composition bias toward basic residues. 2 ABC transporter domains span residues 604–857 (IKFD…RSKE) and 923–1139 (LVFK…DNMV). Residues 636 to 643 (GRNGIGKS) and 956 to 963 (GMNGVGKS) contribute to the ATP site.

Belongs to the ABC transporter superfamily.

The chain is ABC transporter F family member 4 (abcF4) from Dictyostelium discoideum (Social amoeba).